The following is a 149-amino-acid chain: UPF0178 protein Sama_3557 (149 aa).

This sequence belongs to the UPF0178 family.

The protein is UPF0178 protein Sama_3557 of Shewanella amazonensis (strain ATCC BAA-1098 / SB2B).